Consider the following 530-residue polypeptide: NADH-quinone oxidoreductase subunit C/D (530 aa).

Residues 1–144 (MQEIQFIVPA…NPLCMANEET (144 aa)) form an NADH dehydrogenase I subunit C region. The tract at residues 171–530 (EYVVNIGPQH…LDYVVPDIDR (360 aa)) is NADH dehydrogenase I subunit D.

In the N-terminal section; belongs to the complex I 30 kDa subunit family. It in the C-terminal section; belongs to the complex I 49 kDa subunit family. As to quaternary structure, NDH-1 is composed of 13 different subunits. Subunits NuoB, CD, E, F, and G constitute the peripheral sector of the complex.

The protein resides in the cell inner membrane. It catalyses the reaction a quinone + NADH + 5 H(+)(in) = a quinol + NAD(+) + 4 H(+)(out). Functionally, NDH-1 shuttles electrons from NADH, via FMN and iron-sulfur (Fe-S) centers, to quinones in the respiratory chain. The immediate electron acceptor for the enzyme in this species is believed to be a menaquinone. Couples the redox reaction to proton translocation (for every two electrons transferred, four hydrogen ions are translocated across the cytoplasmic membrane), and thus conserves the redox energy in a proton gradient. This chain is NADH-quinone oxidoreductase subunit C/D, found in Bacteroides thetaiotaomicron (strain ATCC 29148 / DSM 2079 / JCM 5827 / CCUG 10774 / NCTC 10582 / VPI-5482 / E50).